Here is a 546-residue protein sequence, read N- to C-terminus: Membrane protein insertase YidC (546 aa).

The chain crosses the membrane as a helical span at residues Asn-6–Asp-26. Over residues Gln-30–Thr-44 the composition is skewed to low complexity. Positions Gln-30–Ser-55 are disordered. 4 consecutive transmembrane segments (helical) span residues Lys-344 to Val-364, Leu-419 to Leu-439, Leu-457 to Ile-477, and Pro-498 to Val-518.

This sequence belongs to the OXA1/ALB3/YidC family. Type 1 subfamily. As to quaternary structure, interacts with the Sec translocase complex via SecD. Specifically interacts with transmembrane segments of nascent integral membrane proteins during membrane integration.

The protein localises to the cell inner membrane. Its function is as follows. Required for the insertion and/or proper folding and/or complex formation of integral membrane proteins into the membrane. Involved in integration of membrane proteins that insert both dependently and independently of the Sec translocase complex, as well as at least some lipoproteins. Aids folding of multispanning membrane proteins. This is Membrane protein insertase YidC from Yersinia pestis.